Consider the following 228-residue polypeptide: Deoxyribose-phosphate aldolase (228 aa).

The Proton donor/acceptor role is filled by Asp-96. The active-site Schiff-base intermediate with acetaldehyde is Lys-157. Lys-185 functions as the Proton donor/acceptor in the catalytic mechanism.

It belongs to the DeoC/FbaB aldolase family. DeoC type 1 subfamily.

The protein resides in the cytoplasm. The enzyme catalyses 2-deoxy-D-ribose 5-phosphate = D-glyceraldehyde 3-phosphate + acetaldehyde. The protein operates within carbohydrate degradation; 2-deoxy-D-ribose 1-phosphate degradation; D-glyceraldehyde 3-phosphate and acetaldehyde from 2-deoxy-alpha-D-ribose 1-phosphate: step 2/2. Its function is as follows. Catalyzes a reversible aldol reaction between acetaldehyde and D-glyceraldehyde 3-phosphate to generate 2-deoxy-D-ribose 5-phosphate. This chain is Deoxyribose-phosphate aldolase, found in Cyanothece sp. (strain PCC 7425 / ATCC 29141).